A 141-amino-acid polypeptide reads, in one-letter code: Putative pre-16S rRNA nuclease (141 aa).

Belongs to the YqgF nuclease family.

Its subcellular location is the cytoplasm. Could be a nuclease involved in processing of the 5'-end of pre-16S rRNA. The polypeptide is Putative pre-16S rRNA nuclease (Coxiella burnetii (strain RSA 331 / Henzerling II)).